The chain runs to 205 residues: Holliday junction branch migration complex subunit RuvA (205 aa).

The domain I stretch occupies residues 1 to 64 (MIGRLNGILV…EDAQLLFGFN (64 aa)). Residues 65-143 (NKVERALFRE…NWGNDLFTPF (79 aa)) form a domain II region. The flexible linker stretch occupies residues 144-156 (SDSAVIEPFSDAT). The domain III stretch occupies residues 157 to 205 (IANNAADDAVSALVSLGYKLPQAQKAVKSVSKPDMSTEVLIKESLKSML).

Belongs to the RuvA family. Homotetramer. Forms an RuvA(8)-RuvB(12)-Holliday junction (HJ) complex. HJ DNA is sandwiched between 2 RuvA tetramers; dsDNA enters through RuvA and exits via RuvB. An RuvB hexamer assembles on each DNA strand where it exits the tetramer. Each RuvB hexamer is contacted by two RuvA subunits (via domain III) on 2 adjacent RuvB subunits; this complex drives branch migration. In the full resolvosome a probable DNA-RuvA(4)-RuvB(12)-RuvC(2) complex forms which resolves the HJ.

It is found in the cytoplasm. Functionally, the RuvA-RuvB-RuvC complex processes Holliday junction (HJ) DNA during genetic recombination and DNA repair, while the RuvA-RuvB complex plays an important role in the rescue of blocked DNA replication forks via replication fork reversal (RFR). RuvA specifically binds to HJ cruciform DNA, conferring on it an open structure. The RuvB hexamer acts as an ATP-dependent pump, pulling dsDNA into and through the RuvAB complex. HJ branch migration allows RuvC to scan DNA until it finds its consensus sequence, where it cleaves and resolves the cruciform DNA. This is Holliday junction branch migration complex subunit RuvA from Pseudoalteromonas translucida (strain TAC 125).